A 268-amino-acid polypeptide reads, in one-letter code: Small ribosomal subunit protein uS3 (268 aa).

The KH type-2 domain maps to Val39–Arg107. The tract at residues Val216–Glu268 is disordered. Residues Gly232–Glu242 are compositionally biased toward basic and acidic residues. Positions Gly248–Ala257 are enriched in low complexity. The segment covering Gly258–Glu268 has biased composition (gly residues).

The protein belongs to the universal ribosomal protein uS3 family. As to quaternary structure, part of the 30S ribosomal subunit. Forms a tight complex with proteins S10 and S14.

Its function is as follows. Binds the lower part of the 30S subunit head. Binds mRNA in the 70S ribosome, positioning it for translation. The polypeptide is Small ribosomal subunit protein uS3 (Paraburkholderia phytofirmans (strain DSM 17436 / LMG 22146 / PsJN) (Burkholderia phytofirmans)).